A 223-amino-acid polypeptide reads, in one-letter code: Sporulation-specific protein 19 (223 aa).

Residues M1 to G20 form the signal peptide. The GPI-anchor amidated asparagine moiety is linked to residue N198. Positions A199 to Y223 are cleaved as a propeptide — removed in mature form.

In terms of processing, the GPI-anchor is attached to the protein in the endoplasmic reticulum and serves to target the protein to the cell surface. There, the glucosamine-inositol phospholipid moiety is cleaved off and the GPI-modified mannoprotein is covalently attached via its lipidless GPI glycan remnant to the 1,6-beta-glucan of the outer cell wall layer.

It localises to the secreted. Its subcellular location is the cell wall. The protein resides in the membrane. In terms of biological role, involved in sporulation. Essential for completion of the nuclear division. This chain is Sporulation-specific protein 19 (SPO19), found in Saccharomyces cerevisiae (strain ATCC 204508 / S288c) (Baker's yeast).